The chain runs to 156 residues: Endoribonuclease YbeY (156 aa).

Zn(2+) contacts are provided by H111, H115, and H121.

Belongs to the endoribonuclease YbeY family. The cofactor is Zn(2+).

It localises to the cytoplasm. In terms of biological role, single strand-specific metallo-endoribonuclease involved in late-stage 70S ribosome quality control and in maturation of the 3' terminus of the 16S rRNA. The protein is Endoribonuclease YbeY of Hahella chejuensis (strain KCTC 2396).